Here is a 370-residue protein sequence, read N- to C-terminus: Probable endopolygalacturonase A (370 aa).

The signal sequence occupies residues 1-19; the sequence is MPSAKPLFCLATLAGAALA. Positions 20 to 32 are excised as a propeptide; that stretch reads APAPSRVSDFTKR. Cysteine 35 and cysteine 50 form a disulfide bridge. 6 PbH1 repeats span residues 162–192, 193–214, 215–235, 244–265, 273–295, and 307–352; these read SDNL…DISE, STYI…AINS, GENI…SIGS, VKNV…RIKT, VEDI…VIEQ, and SNGV…DITG. Aspartate 207 functions as the Proton donor in the catalytic mechanism. Cysteine 209 and cysteine 225 are joined by a disulfide. Residue histidine 229 is part of the active site. N-linked (GlcNAc...) asparagine glycosylation is present at asparagine 246. Cystine bridges form between cysteine 335/cysteine 340 and cysteine 359/cysteine 368.

Belongs to the glycosyl hydrolase 28 family.

The protein localises to the secreted. It catalyses the reaction (1,4-alpha-D-galacturonosyl)n+m + H2O = (1,4-alpha-D-galacturonosyl)n + (1,4-alpha-D-galacturonosyl)m.. Its function is as follows. Involved in maceration and soft-rotting of plant tissue. Hydrolyzes the 1,4-alpha glycosidic bonds of de-esterified pectate in the smooth region of the plant cell wall. The chain is Probable endopolygalacturonase A (pgaA) from Aspergillus niger (strain ATCC MYA-4892 / CBS 513.88 / FGSC A1513).